Consider the following 87-residue polypeptide: Small ribosomal subunit protein bS20 (87 aa).

A disordered region spans residues 1 to 28 (MANSAQARKRARQASAQRDHNMSQRSEL). Residues 17-28 (QRDHNMSQRSEL) show a composition bias toward basic and acidic residues.

The protein belongs to the bacterial ribosomal protein bS20 family.

Its function is as follows. Binds directly to 16S ribosomal RNA. The sequence is that of Small ribosomal subunit protein bS20 from Thiobacillus denitrificans (strain ATCC 25259 / T1).